A 139-amino-acid chain; its full sequence is MRITQGTFSFLPELTDEQITKQLEYCLNQGWAVGLEYTDDPHPRNTYWEMFGLPMFDLRDAAGILMEINNARNTFPNHYIRVTAFDSTHTVESVVMSFIVNRPADEPGFRLVRQEEPGRTLRYSIESYAVQARPEGSRY.

This sequence belongs to the RuBisCO small chain family. As to quaternary structure, heterohexadecamer of 8 large and 8 small subunits.

Functionally, ruBisCO catalyzes two reactions: the carboxylation of D-ribulose 1,5-bisphosphate, the primary event in carbon dioxide fixation, as well as the oxidative fragmentation of the pentose substrate. Both reactions occur simultaneously and in competition at the same active site. Although the small subunit is not catalytic it is essential for maximal activity. The protein is Ribulose bisphosphate carboxylase small subunit, chromosomal of Cupriavidus necator (Alcaligenes eutrophus).